We begin with the raw amino-acid sequence, 1580 residues long: Ras GTPase-activating protein raskol (1580 aa).

At Ser164 the chain carries Phosphoserine. A Phosphothreonine modification is found at Thr167. Residues 197–223 form a disordered region; it reads LKRTKSVTKLERTKRGSGGLRGSRSHE. Phosphoserine is present on residues Ser221 and Ser224. In terms of domain architecture, PH spans 233-291; it reads STIDLSCTGAVGVAPVHQSVLGRRHCFQVRGGPRGERYYSCGSRQERDLWIYSLRKSIA. The C2 domain maps to 282 to 400; the sequence is WIYSLRKSIA…TSRLPCEQWY (119 aa). Positions 490–700 constitute a Ras-GAP domain; sequence GLAGAFLTDV…ARMQQFLEII (211 aa). Disordered stretches follow at residues 764 to 819, 857 to 892, 904 to 1023, 1112 to 1218, 1284 to 1313, 1334 to 1443, and 1561 to 1580; these read GMGT…QPQH, LLQQ…HQHP, AGNQ…SYDD, ANHH…QQFG, LSGG…YGRL, VGYG…LGKS, and YETQ…QKPQ. Residues 776–805 are compositionally biased toward polar residues; that stretch reads ATSSTHSIASENQENRNPGSSGSHAGSNSE. Low complexity-rich tracts occupy residues 806–818, 857–885, and 926–939; these read QLLP…AQPQ, LLQQ…GHQQ, and SSSL…LLHG. Basic residues predominate over residues 940–954; the sequence is HQQHAHHPQQLHPHH. Low complexity predominate over residues 987–1020; sequence TSTPSSTRSRTLPRNGNPNANGNVGSSNNNQSGS. Residues 1140–1150 show a composition bias toward polar residues; sequence SAKSSHCSSGY. Residues 1151 to 1169 show a composition bias toward low complexity; the sequence is QSISTNPSPSQSSSPVESQ. Phosphoserine occurs at positions 1158 and 1164. Over residues 1186 to 1206 the composition is skewed to polar residues; that stretch reads PSYQLQPQTGSSRSSAQSNTH. 3 stretches are compositionally biased toward low complexity: residues 1207 to 1216, 1285 to 1299, and 1351 to 1362; these read QQQQQQQQQQ, SGGS…ASTS, and HQQQQNPMQQQQ. Positions 1363–1372 are enriched in basic and acidic residues; the sequence is QRERDQEHKQ. The span at 1374–1388 shows a compositional bias: low complexity; sequence AGSVAGSVGSATSAA. The span at 1396–1415 shows a compositional bias: polar residues; the sequence is SARTLSDSSTDTEGHCNQLQ. 2 positions are modified to phosphoserine: Ser1401 and Ser1403. Positions 1427–1438 are enriched in gly residues; sequence GGSGGGGAGSEQ. Over residues 1563 to 1580 the composition is skewed to low complexity; sequence TQQQQQQHQAPPKTQKPQ.

Its subcellular location is the cytoplasm. The protein localises to the cell membrane. It localises to the apical cell membrane. GTPase-activating protein, which acts as a negative regulator for some members of the Ras family. Probably decreases their signaling activity by stimulating their intrinsic GTPase activity, thereby lowering the levels of the GTP-bound active form. Functions with DE-cadherin (shg) to promote embryonic border cell (BC) migration and adhesion by regulating the distribution of actin protrusions in BCs. Promotes shg-mediated adhesion at the BC interfaces and likely maintains BC cluster adhesion during BC detachment from the follicular epithelium and subsequent BC migration. Also required for restricting the development of actin-rich protrusions to the front of migrating BC clusters thus ensuring unidirectional BC migration. Possibly functions by suppressing Rac1 signaling in non-leading BCs, thus limiting its activity to leading BCs where it initiates localized actin cytoskeleton remodeling to produce the polarized protrusions. In Drosophila melanogaster (Fruit fly), this protein is Ras GTPase-activating protein raskol.